An 87-amino-acid polypeptide reads, in one-letter code: Sec-independent protein translocase protein TatA (87 aa).

Residues 1–21 (MGSFSIWHWLIVLLIVVMVFG) form a helical membrane-spanning segment. The disordered stretch occupies residues 40-87 (KDGMKDGSTPEGTPASTTAATPPAGQVTNQQAHAADPGTIDVEAKHKG). The segment covering 46-64 (GSTPEGTPASTTAATPPAG) has biased composition (low complexity).

It belongs to the TatA/E family. The Tat system comprises two distinct complexes: a TatABC complex, containing multiple copies of TatA, TatB and TatC subunits, and a separate TatA complex, containing only TatA subunits. Substrates initially bind to the TatABC complex, which probably triggers association of the separate TatA complex to form the active translocon.

Its subcellular location is the cell inner membrane. Its function is as follows. Part of the twin-arginine translocation (Tat) system that transports large folded proteins containing a characteristic twin-arginine motif in their signal peptide across membranes. TatA could form the protein-conducting channel of the Tat system. The polypeptide is Sec-independent protein translocase protein TatA (Paracidovorax citrulli (strain AAC00-1) (Acidovorax citrulli)).